Here is a 103-residue protein sequence, read N- to C-terminus: MQNQRIRIRLKAFDHRLIDQSTSEIVETAKRTGAQVRGPIPLPTRKEKFTILVSPHVDKDARDQYEIRTHKRLVDIVKPTEKTVDALMRLDLASGVDVQISLG.

This sequence belongs to the universal ribosomal protein uS10 family. Part of the 30S ribosomal subunit.

Involved in the binding of tRNA to the ribosomes. The protein is Small ribosomal subunit protein uS10 of Wigglesworthia glossinidia brevipalpis.